The chain runs to 518 residues: MTYEIGDRLKIGGYFCTIKFIGVIKPWPSVKAYGVEWDDHSRGKHSGTIDDIHYFDVQIPNSGSFLKESKIKSPGVRRITFYEALSEKYGGSSNNINDLSIGNKRVEGLGFDELNARNKNYKKLRKIALRDSDVAILFQNQDELNRVIQNCVNVKDLDLSLNLFTNINSLCEFIEPLKNLESLNISQNKLLSGWDNLKEYDLSHIKTLRLSSCGLSYKHIGKLLKSFRTLKMLDLSYNNLTSAGIQNFENEIPCTLEELNISGNNLISFPLFPKNLTLKGLNVSNNQISRAPSIAIYSVESLDITDNKFKERSLIDDLNKTFPSLKNIHLSGNEFNYNGNYINVEEQATFYEVLARFDRVMVLNGSICDVKTRREAEMFFVSKVMNNELSYDTNLPRWSSLIKSYEIDMSKLSFNNERETRQSLVLKIKIRAGKKPSSDLDYWVLPSFTVRYVKSVICRKLNFDILNVKLFHENSEGMINEIKYNFRPISDFNVVNGDIIHVSSPVNNKSIQKVNSPS.

The 45-residue stretch at 23-67 (VIKPWPSVKAYGVEWDDHSRGKHSGTIDDIHYFDVQIPNSGSFLK) folds into the CAP-Gly domain. LRR repeat units lie at residues 153 to 174 (NVKD…CEFI), 179 to 201 (NLES…KEYD), 204 to 227 (HIKT…LKSF), 229 to 252 (TLKM…ENEI), 255 to 276 (TLEE…PKNL), 277 to 298 (TLKG…AIYS), 299 to 319 (VESL…DDLN), and 324 to 345 (SLKN…INVE).

Its subcellular location is the cytoplasm. It is found in the cytoskeleton. Its function is as follows. Required for viability in the absence of the kinesin-related CIN8 mitotic motor. Seems to be involved in the assembly of alpha-tubulin. This is Protein PAC2 (PAC2) from Saccharomyces cerevisiae (strain ATCC 204508 / S288c) (Baker's yeast).